A 586-amino-acid chain; its full sequence is Asparagine synthetase, nodule [glutamine-hydrolyzing] (586 aa).

The active-site For GATase activity is Cys-2. Residues 2 to 185 (CGILAVLGCS…PGHLYSSKER (184 aa)) enclose the Glutamine amidotransferase type-2 domain. L-glutamine is bound by residues 50-54 (RLAIV), 75-77 (NGE), and Asp-98. The Asparagine synthetase domain maps to 193 to 517 (PPWFNEAIIP…PQNSARLTVP (325 aa)). ATP-binding positions include Leu-232, Val-268, and 342–343 (SG).

Root nodules.

The catalysed reaction is L-aspartate + L-glutamine + ATP + H2O = L-asparagine + L-glutamate + AMP + diphosphate + H(+). Its pathway is amino-acid biosynthesis; L-asparagine biosynthesis; L-asparagine from L-aspartate (L-Gln route): step 1/1. The protein is Asparagine synthetase, nodule [glutamine-hydrolyzing] (AS1) of Pisum sativum (Garden pea).